A 365-amino-acid chain; its full sequence is tRNA/tmRNA (uracil-C(5))-methyltransferase (365 aa).

5 residues coordinate S-adenosyl-L-methionine: Gln-189, Tyr-217, Asn-222, Glu-238, and Asp-298. Cys-323 (nucleophile) is an active-site residue. The Proton acceptor role is filled by Glu-357.

It belongs to the class I-like SAM-binding methyltransferase superfamily. RNA M5U methyltransferase family. TrmA subfamily.

It catalyses the reaction uridine(54) in tRNA + S-adenosyl-L-methionine = 5-methyluridine(54) in tRNA + S-adenosyl-L-homocysteine + H(+). The catalysed reaction is uridine(341) in tmRNA + S-adenosyl-L-methionine = 5-methyluridine(341) in tmRNA + S-adenosyl-L-homocysteine + H(+). In terms of biological role, dual-specificity methyltransferase that catalyzes the formation of 5-methyluridine at position 54 (m5U54) in all tRNAs, and that of position 341 (m5U341) in tmRNA (transfer-mRNA). The sequence is that of tRNA/tmRNA (uracil-C(5))-methyltransferase from Shewanella piezotolerans (strain WP3 / JCM 13877).